We begin with the raw amino-acid sequence, 577 residues long: uncharacterized protein (577 aa).

2 stretches are compositionally biased toward polar residues: residues 1 to 21 and 68 to 87; these read MSSTPTAEELALQNTVSQSAS and SFQNLTPVNSNPSNQNSKTE. Disordered stretches follow at residues 1–24 and 68–93; these read MSSTPTAEELALQNTVSQSASAHP and SFQNLTPVNSNPSNQNSKTEPNPDDV. Helical transmembrane passes span 139–159, 174–194, 204–224, 232–252, 262–282, 292–312, 367–387, 402–422, 447–467, 473–493, 504–526, and 543–563; these read CILAYVALCSSFASSVFAVPA, LLTMTVFLLGYCSGPIIWAPL, ILIGMLGFGIFNISVAVGKDI, FFAGFFASAPLTVVAAALADM, ITLFSAMVFDGPLVSPIVGGF, WTEYITSFMGFFALIIVYLFC, PICFLITLYSSFVYAILYLLL, MGVAELPYIGLLVGVFIGSGI, LPPMMIGCFMFPAGIFWLSWS, VNWVVPALSGLATGCGILLIF, YLFRAASAIAANTIMRSAMAAGF, and GSLLGFIATALIPMPFVFFFF.

It belongs to the major facilitator superfamily. CAR1 family.

Its subcellular location is the endoplasmic reticulum. The protein resides in the membrane. This is an uncharacterized protein from Schizosaccharomyces pombe (strain 972 / ATCC 24843) (Fission yeast).